A 160-amino-acid chain; its full sequence is Cytochrome b6-f complex subunit 4 (160 aa).

3 helical membrane passes run L36–I56, L95–E115, and T131–I151.

Belongs to the cytochrome b family. PetD subfamily. The 4 large subunits of the cytochrome b6-f complex are cytochrome b6, subunit IV (17 kDa polypeptide, petD), cytochrome f and the Rieske protein, while the 4 small subunits are petG, petL, petM and petN. The complex functions as a dimer.

The protein localises to the plastid. It is found in the chloroplast thylakoid membrane. Component of the cytochrome b6-f complex, which mediates electron transfer between photosystem II (PSII) and photosystem I (PSI), cyclic electron flow around PSI, and state transitions. In Acorus calamus (Sweet flag), this protein is Cytochrome b6-f complex subunit 4.